The sequence spans 214 residues: Large ribosomal subunit protein uL3 (214 aa).

Residues glycine 131–proline 155 are disordered. Glutamine 153 is subject to N5-methylglutamine.

This sequence belongs to the universal ribosomal protein uL3 family. In terms of assembly, part of the 50S ribosomal subunit. Forms a cluster with proteins L14 and L19. Methylated by PrmB.

One of the primary rRNA binding proteins, it binds directly near the 3'-end of the 23S rRNA, where it nucleates assembly of the 50S subunit. The sequence is that of Large ribosomal subunit protein uL3 from Neisseria meningitidis serogroup C (strain 053442).